A 314-amino-acid polypeptide reads, in one-letter code: DNA-directed RNA polymerase subunit alpha (314 aa).

The tract at residues 1–228 (MIEIEKPKIE…EHLNIFVGLT (228 aa)) is alpha N-terminal domain (alpha-NTD). The tract at residues 245 to 314 (KEKVMEMTIE…DLGLGLRDDD (70 aa)) is alpha C-terminal domain (alpha-CTD).

This sequence belongs to the RNA polymerase alpha chain family. As to quaternary structure, homodimer. The RNAP catalytic core consists of 2 alpha, 1 beta, 1 beta' and 1 omega subunit. When a sigma factor is associated with the core the holoenzyme is formed, which can initiate transcription.

The catalysed reaction is RNA(n) + a ribonucleoside 5'-triphosphate = RNA(n+1) + diphosphate. In terms of biological role, DNA-dependent RNA polymerase catalyzes the transcription of DNA into RNA using the four ribonucleoside triphosphates as substrates. The sequence is that of DNA-directed RNA polymerase subunit alpha from Oceanobacillus iheyensis (strain DSM 14371 / CIP 107618 / JCM 11309 / KCTC 3954 / HTE831).